The chain runs to 538 residues: Syncytin-2 (538 aa).

Residues 1 to 15 form the signal peptide; that stretch reads MGLLLLVLILTPSLA. Topologically, residues 16-478 are extracellular; sequence AYRHPDFPLL…GWLNWEGTWK (463 aa). The CXXC motif lies at 43–46; that stretch reads CWLC. 3 disulfides stabilise this stretch: cysteine 43/cysteine 46, cysteine 43/cysteine 439, and cysteine 431/cysteine 438. N-linked (GlcNAc...) asparagine glycans are attached at residues asparagine 133, asparagine 146, asparagine 177, asparagine 220, asparagine 241, asparagine 247, asparagine 312, and asparagine 332. Residues 354–374 form a fusion peptide region; that stretch reads FIPLLAGLGILAGTGTGIAGI. Positions 414 to 430 match the CKS-17 motif; sequence LQNRRGLDMLTAAQGGI. The short motif at 431–439 is the CX6CC element; that stretch reads CLALDEKCC. Asparagine 443 is a glycosylation site (N-linked (GlcNAc...) asparagine). Residues 479–499 traverse the membrane as a helical segment; that stretch reads WFSWVLPLTGPLVSLLLLLLF. Topologically, residues 500–538 are cytoplasmic; the sequence is GPCLLNLITQFVSSRLQAIKLQTNLSAGRHPRNIQESPF.

Belongs to the gamma type-C retroviral envelope protein family. HERV class-I FRD env subfamily. As to quaternary structure, the surface and transmembrane proteins form a heterodimer. They are attached by non-covalent interactions or by a labile interchain disulfide bond. Specific enzymatic cleavages in vivo yield the mature SU and TM proteins. Post-translationally, the CXXC motif is highly conserved across a broad range of retroviral envelope proteins. It is thought to participate in the formation of a labile disulfide bond possibly with the CX6CC motif present in the transmembrane protein.

The protein resides in the virion. It is found in the cell membrane. Its function is as follows. This endogenous retroviral envelope protein has retained its original fusogenic properties and participates in trophoblast fusion and the formation of a syncytium during placenta morphogenesis. The interaction with MFSD2A is apparently important for this process. Functionally, endogenous envelope proteins may have kept, lost or modified their original function during evolution but this one can still make pseudotypes with MLV, HIV-1 or SIV-1 virions and confer infectivity. Retroviral envelope proteins mediate receptor recognition and membrane fusion during early infection. The surface protein mediates receptor recognition, while the transmembrane protein anchors the envelope heterodimer to the viral membrane through one transmembrane domain. The other hydrophobic domain, called fusion peptide, mediates fusion of the viral membrane with the target cell membrane. The chain is Syncytin-2 (ERVFRD-1) from Pan troglodytes (Chimpanzee).